Consider the following 148-residue polypeptide: Putative nickel-responsive regulator (148 aa).

4 residues coordinate Ni(2+): histidine 88, histidine 99, histidine 101, and cysteine 107.

Belongs to the transcriptional regulatory CopG/NikR family. It depends on Ni(2+) as a cofactor.

In terms of biological role, transcriptional regulator. The chain is Putative nickel-responsive regulator from Helicobacter pylori (strain HPAG1).